The sequence spans 240 residues: UDP-2,3-diacylglucosamine hydrolase (240 aa).

The Mn(2+) site is built by Asp8, His10, Asp41, Asn79, and His114. 79–80 (NR) contributes to the substrate binding site. Residues Asp122, Ser160, Asn164, Lys167, and His195 each coordinate substrate. Residues His195 and His197 each coordinate Mn(2+).

This sequence belongs to the LpxH family. The cofactor is Mn(2+).

Its subcellular location is the cell inner membrane. It carries out the reaction UDP-2-N,3-O-bis[(3R)-3-hydroxytetradecanoyl]-alpha-D-glucosamine + H2O = 2-N,3-O-bis[(3R)-3-hydroxytetradecanoyl]-alpha-D-glucosaminyl 1-phosphate + UMP + 2 H(+). Its pathway is glycolipid biosynthesis; lipid IV(A) biosynthesis; lipid IV(A) from (3R)-3-hydroxytetradecanoyl-[acyl-carrier-protein] and UDP-N-acetyl-alpha-D-glucosamine: step 4/6. Its function is as follows. Hydrolyzes the pyrophosphate bond of UDP-2,3-diacylglucosamine to yield 2,3-diacylglucosamine 1-phosphate (lipid X) and UMP by catalyzing the attack of water at the alpha-P atom. Involved in the biosynthesis of lipid A, a phosphorylated glycolipid that anchors the lipopolysaccharide to the outer membrane of the cell. This Yersinia pestis bv. Antiqua (strain Angola) protein is UDP-2,3-diacylglucosamine hydrolase.